A 127-amino-acid polypeptide reads, in one-letter code: Large ribosomal subunit protein eL8 (127 aa).

The protein belongs to the eukaryotic ribosomal protein eL8 family. Part of the 50S ribosomal subunit. Probably part of the RNase P complex.

The protein resides in the cytoplasm. In terms of biological role, multifunctional RNA-binding protein that recognizes the K-turn motif in ribosomal RNA, the RNA component of RNase P, box H/ACA, box C/D and box C'/D' sRNAs. This Saccharolobus islandicus (strain Y.N.15.51 / Yellowstone #2) (Sulfolobus islandicus) protein is Large ribosomal subunit protein eL8.